Reading from the N-terminus, the 150-residue chain is Non-structural protein (150 aa).

The interval Pro-93–Met-140 is apoptotic activity.

In terms of biological role, disrupts the host mitochondrial membrane potential and induces apoptosis probably by inducing host CASP8 and CASP9. In Bos taurus (Bovine), this protein is Non-structural protein.